The following is a 69-amino-acid chain: Cold shock-like protein CspC (69 aa).

The region spanning Gly6–Val66 is the CSD domain.

Its subcellular location is the cytoplasm. The sequence is that of Cold shock-like protein CspC (cspC) from Buchnera aphidicola subsp. Acyrthosiphon pisum (strain APS) (Acyrthosiphon pisum symbiotic bacterium).